A 620-amino-acid chain; its full sequence is Protein AFR1 (620 aa).

The segment covering 1-12 (MEGSYLSAQENQ) has biased composition (polar residues). Positions 1-20 (MEGSYLSAQENQPIPERLIP) are disordered. Ser472 and Ser526 each carry phosphoserine.

It to yeast YER158C.

Functionally, acts in conjunction with the alpha-factor receptor to promote morphogenesis and adaptation. The polypeptide is Protein AFR1 (AFR1) (Saccharomyces cerevisiae (strain ATCC 204508 / S288c) (Baker's yeast)).